The primary structure comprises 229 residues: Putative N-acetylmannosamine-6-phosphate 2-epimerase (229 aa).

The protein belongs to the NanE family.

It catalyses the reaction an N-acyl-D-glucosamine 6-phosphate = an N-acyl-D-mannosamine 6-phosphate. The protein operates within amino-sugar metabolism; N-acetylneuraminate degradation; D-fructose 6-phosphate from N-acetylneuraminate: step 3/5. In terms of biological role, converts N-acetylmannosamine-6-phosphate (ManNAc-6-P) to N-acetylglucosamine-6-phosphate (GlcNAc-6-P). This chain is Putative N-acetylmannosamine-6-phosphate 2-epimerase, found in Shigella flexneri serotype 5b (strain 8401).